The primary structure comprises 457 residues: Phosphoglucosamine mutase (457 aa).

Ser-103 serves as the catalytic Phosphoserine intermediate. Residues Ser-103, Asp-245, Asp-247, and Asp-249 each contribute to the Mg(2+) site. Ser-103 bears the Phosphoserine mark.

It belongs to the phosphohexose mutase family. The cofactor is Mg(2+). Activated by phosphorylation.

The enzyme catalyses alpha-D-glucosamine 1-phosphate = D-glucosamine 6-phosphate. Functionally, catalyzes the conversion of glucosamine-6-phosphate to glucosamine-1-phosphate. The protein is Phosphoglucosamine mutase of Syntrophotalea carbinolica (strain DSM 2380 / NBRC 103641 / GraBd1) (Pelobacter carbinolicus).